The chain runs to 551 residues: L-lactate permease (551 aa).

The next 12 membrane-spanning stretches (helical) occupy residues 13 to 33, 37 to 57, 70 to 90, 131 to 151, 159 to 179, 194 to 214, 244 to 264, 366 to 386, 405 to 425, 438 to 458, 494 to 514, and 530 to 550; these read NIWL…FALI, LKGY…ALLF, VYGF…AVFV, GAAG…GLGF, LCLI…PILV, MVGR…MAIM, FIGP…CLTL, FDWF…SIVW, LALP…SNYS, TGHA…FLTG, VTGK…VGLV, and IFTC…TWMI.

The protein belongs to the lactate permease family.

It is found in the cell inner membrane. It carries out the reaction (S)-lactate(in) + H(+)(in) = (S)-lactate(out) + H(+)(out). The catalysed reaction is (R)-lactate(in) + H(+)(in) = (R)-lactate(out) + H(+)(out). The enzyme catalyses glycolate(in) + H(+)(in) = glycolate(out) + H(+)(out). Functionally, uptake of L-lactate across the membrane. Can also transport D-lactate and glycolate. Seems to be driven by a proton motive force. The chain is L-lactate permease (lldP) from Escherichia coli O6:H1 (strain CFT073 / ATCC 700928 / UPEC).